Here is a 203-residue protein sequence, read N- to C-terminus: ATP-dependent Clp protease proteolytic subunit (203 aa).

Ser103 functions as the Nucleophile in the catalytic mechanism. His128 is a catalytic residue.

It belongs to the peptidase S14 family. As to quaternary structure, fourteen ClpP subunits assemble into 2 heptameric rings which stack back to back to give a disk-like structure with a central cavity, resembling the structure of eukaryotic proteasomes.

The protein resides in the cytoplasm. The catalysed reaction is Hydrolysis of proteins to small peptides in the presence of ATP and magnesium. alpha-casein is the usual test substrate. In the absence of ATP, only oligopeptides shorter than five residues are hydrolyzed (such as succinyl-Leu-Tyr-|-NHMec, and Leu-Tyr-Leu-|-Tyr-Trp, in which cleavage of the -Tyr-|-Leu- and -Tyr-|-Trp bonds also occurs).. Functionally, cleaves peptides in various proteins in a process that requires ATP hydrolysis. Has a chymotrypsin-like activity. Plays a major role in the degradation of misfolded proteins. In Nitrosococcus oceani (strain ATCC 19707 / BCRC 17464 / JCM 30415 / NCIMB 11848 / C-107), this protein is ATP-dependent Clp protease proteolytic subunit.